Consider the following 590-residue polypeptide: ATP-dependent zinc metalloprotease FtsH 1 (590 aa).

Over 1–8 (MLKLTKKQ) the chain is Cytoplasmic. A helical transmembrane segment spans residues 9 to 29 (LIIVLGIAIVVVSAIGYAVYT). Residues 30-103 (QYFNEDKLEI…QVRETTDQYS (74 aa)) are Extracellular-facing. The chain crosses the membrane as a helical span at residues 104–124 (VVQVITFVVLIGGFIGVAIFL). The Cytoplasmic portion of the chain corresponds to 125-590 (SKKNATQTSK…NEIFSGFQSM (466 aa)). Residue 195 to 202 (GSPGTGKT) participates in ATP binding. Histidine 418 is a binding site for Zn(2+). Glutamate 419 is a catalytic residue. Positions 422 and 496 each coordinate Zn(2+).

The protein in the central section; belongs to the AAA ATPase family. This sequence in the C-terminal section; belongs to the peptidase M41 family. As to quaternary structure, homohexamer. The cofactor is Zn(2+).

The protein resides in the cell membrane. In terms of biological role, acts as a processive, ATP-dependent zinc metallopeptidase for both cytoplasmic and membrane proteins. Plays a role in the quality control of integral membrane proteins. The sequence is that of ATP-dependent zinc metalloprotease FtsH 1 from Alkaliphilus metalliredigens (strain QYMF).